Consider the following 447-residue polypeptide: D-ribitol-5-phosphate cytidylyltransferase (447 aa).

The protein belongs to the IspD/TarI cytidylyltransferase family. IspD subfamily. In terms of assembly, homodimer.

It is found in the cytoplasm. It localises to the cytosol. It carries out the reaction D-ribitol 5-phosphate + CTP + H(+) = CDP-L-ribitol + diphosphate. The enzyme catalyses D-ribose 5-phosphate + CTP + H(+) = CDP-D-ribose + diphosphate. It catalyses the reaction D-ribulose 5-phosphate + CTP + H(+) = CDP-D-ribulose + diphosphate. It participates in protein modification; protein glycosylation. Its function is as follows. Cytidylyltransferase required for protein O-linked mannosylation. Catalyzes the formation of CDP-ribitol nucleotide sugar from D-ribitol 5-phosphate. CDP-ribitol is a substrate of FKTN during the biosynthesis of the phosphorylated O-mannosyl trisaccharide (N-acetylgalactosamine-beta-3-N-acetylglucosamine-beta-4-(phosphate-6-)mannose), a carbohydrate structure present in alpha-dystroglycan (DAG1), which is required for binding laminin G-like domain-containing extracellular proteins with high affinity. Shows activity toward other pentose phosphate sugars and mediates formation of CDP-ribulose or CDP-ribose using CTP and ribulose-5-phosphate or ribose-5-phosphate, respectively. Not involved in dolichol production. This chain is D-ribitol-5-phosphate cytidylyltransferase (Crppa), found in Rattus norvegicus (Rat).